The following is a 104-amino-acid chain: Large ribosomal subunit protein bL21 (104 aa).

This sequence belongs to the bacterial ribosomal protein bL21 family. As to quaternary structure, part of the 50S ribosomal subunit. Contacts protein L20.

This protein binds to 23S rRNA in the presence of protein L20. This Streptococcus equi subsp. equi (strain 4047) protein is Large ribosomal subunit protein bL21.